Here is a 194-residue protein sequence, read N- to C-terminus: dCTP deaminase, dUMP-forming (194 aa).

Residues 104 to 109 (RSSLGR), Asp122, 130 to 132 (TLE), Gln151, Tyr165, Lys172, and Gln176 each bind dCTP. Residue Glu132 is the Proton donor/acceptor of the active site.

Belongs to the dCTP deaminase family. Homotrimer.

The enzyme catalyses dCTP + 2 H2O = dUMP + NH4(+) + diphosphate. The protein operates within pyrimidine metabolism; dUMP biosynthesis; dUMP from dCTP: step 1/1. Functionally, bifunctional enzyme that catalyzes both the deamination of dCTP to dUTP and the hydrolysis of dUTP to dUMP without releasing the toxic dUTP intermediate. In Dictyoglomus turgidum (strain DSM 6724 / Z-1310), this protein is dCTP deaminase, dUMP-forming.